We begin with the raw amino-acid sequence, 489 residues long: Betaine aldehyde dehydrogenase (489 aa).

K(+) contacts are provided by threonine 26 and aspartate 93. 150 to 152 lines the NAD(+) pocket; sequence GAW. The active-site Charge relay system is lysine 162. 176–179 is an NAD(+) binding site; sequence KPSE. Valine 180 is a K(+) binding site. Residue 229–232 participates in NAD(+) binding; sequence GVET. Leucine 245 lines the K(+) pocket. The active-site Proton acceptor is glutamate 251. NAD(+) is bound by residues glycine 253, cysteine 285, and glutamate 386. Catalysis depends on cysteine 285, which acts as the Nucleophile. Residue cysteine 285 is modified to Cysteine sulfenic acid (-SOH). Residues lysine 456 and glycine 459 each coordinate K(+). Glutamate 463 serves as the catalytic Charge relay system.

It belongs to the aldehyde dehydrogenase family. In terms of assembly, dimer of dimers. Requires K(+) as cofactor.

It catalyses the reaction betaine aldehyde + NAD(+) + H2O = glycine betaine + NADH + 2 H(+). It participates in amine and polyamine biosynthesis; betaine biosynthesis via choline pathway; betaine from betaine aldehyde: step 1/1. Functionally, involved in the biosynthesis of the osmoprotectant glycine betaine. Catalyzes the irreversible oxidation of betaine aldehyde to the corresponding acid. This chain is Betaine aldehyde dehydrogenase, found in Burkholderia vietnamiensis (strain G4 / LMG 22486) (Burkholderia cepacia (strain R1808)).